The following is a 147-amino-acid chain: Phospholipase A2 SSD1043 (147 aa).

The first 22 residues, 1–22 (MSPKFMFFSIIAVWSCAAVTEA), serve as a signal peptide directing secretion. Residues 23-28 (LFIQHR) constitute a propeptide that is removed on maturation. 5 cysteine pairs are disulfide-bonded: Cys55-Cys71, Cys70-Cys130, Cys77-Cys123, Cys86-Cys116, and Cys109-Cys121. Gly56 and Gly58 together coordinate Ca(2+). His74 is an active-site residue. Asp75 is a Ca(2+) binding site. Asp124 is a catalytic residue.

Ca(2+) is required as a cofactor. Expressed by the venom gland.

The protein localises to the secreted. The catalysed reaction is a 1,2-diacyl-sn-glycero-3-phosphocholine + H2O = a 1-acyl-sn-glycero-3-phosphocholine + a fatty acid + H(+). Functionally, PLA2 catalyzes the calcium-dependent hydrolysis of the 2-acyl groups in 3-sn-phosphoglycerides. In Scolopendra dehaani (Thai centipede), this protein is Phospholipase A2 SSD1043.